The following is a 258-amino-acid chain: 5'-nucleotidase SurE (258 aa).

Asp9, Asp10, Ser42, and Asn96 together coordinate a divalent metal cation.

The protein belongs to the SurE nucleotidase family. A divalent metal cation serves as cofactor.

The protein resides in the cytoplasm. The catalysed reaction is a ribonucleoside 5'-phosphate + H2O = a ribonucleoside + phosphate. In terms of biological role, nucleotidase that shows phosphatase activity on nucleoside 5'-monophosphates. The sequence is that of 5'-nucleotidase SurE from Campylobacter jejuni subsp. jejuni serotype O:23/36 (strain 81-176).